Reading from the N-terminus, the 431-residue chain is MKRRTFTAGLAALPFLGSSLTRAFAQDAAASLPKTYSGQKIRALASTGAAFEAMATVSRDFTEATGIAVEYVNLSYNEQYQKLILDLTSGAASFDVFNFAYQWKFEIEPYCADLANIPKEIQGAPDLALDDYPQRALEIYGRANNKLIGLPTLGDVTLFVWNKEAYKAAGLDPDAAPKTWDEVVERGAKLVSNGQFGYAMPAGKGIQTTVTWIMVFKSMGGEYFDASGAPTFASEAGVKTMKFLVEKLAAVSPPGNLAWDFPEMFNSLSTGQSGQSMMWPGAFGDLLNPKRSQVHDKIGWSPMPQASLLGGWSMGVNDASRSKDAAKLYVAWLTSPDIVRRMGLIGGAPARISALKDPELIKQAPNRPAVLAGLQGDVAEYPPIKEAEQVHIMIYDEVNAAVAKIKTPEQAASDLQGKVESFMRRRGYLKT.

Residues 1–25 (MKRRTFTAGLAALPFLGSSLTRAFA) form the signal peptide.

The protein belongs to the bacterial solute-binding protein 1 family.

It localises to the periplasm. Probably part of the binding-protein-dependent transport system y4oPQRS. This system probably transports a sugar-like molecule. This chain is Probable amino-acid ABC transporter periplasmic-binding protein y4oP, found in Sinorhizobium fredii (strain NBRC 101917 / NGR234).